The chain runs to 309 residues: Carbamate kinase 2 (309 aa).

The protein belongs to the carbamate kinase family.

Its subcellular location is the cytoplasm. It carries out the reaction hydrogencarbonate + NH4(+) + ATP = carbamoyl phosphate + ADP + H2O + H(+). Its pathway is metabolic intermediate metabolism; carbamoyl phosphate degradation; CO(2) and NH(3) from carbamoyl phosphate: step 1/1. This chain is Carbamate kinase 2 (arcC2), found in Staphylococcus epidermidis (strain ATCC 12228 / FDA PCI 1200).